The primary structure comprises 103 residues: Small ribosomal subunit protein uS10 (103 aa).

The protein belongs to the universal ribosomal protein uS10 family. Part of the 30S ribosomal subunit.

Its function is as follows. Involved in the binding of tRNA to the ribosomes. The protein is Small ribosomal subunit protein uS10 of Stutzerimonas stutzeri (strain A1501) (Pseudomonas stutzeri).